The chain runs to 275 residues: Large ribosomal subunit protein uL2 (275 aa).

The disordered stretch occupies residues 223–275 (VAMNPVDHPHGGGEGRTGEAREPVSPWGTPSKGFKTRRNKRTNNMIVQRRKRK). A compositionally biased stretch (basic and acidic residues) spans 229–244 (DHPHGGGEGRTGEARE).

It belongs to the universal ribosomal protein uL2 family. In terms of assembly, part of the 50S ribosomal subunit. Forms a bridge to the 30S subunit in the 70S ribosome.

Its function is as follows. One of the primary rRNA binding proteins. Required for association of the 30S and 50S subunits to form the 70S ribosome, for tRNA binding and peptide bond formation. It has been suggested to have peptidyltransferase activity; this is somewhat controversial. Makes several contacts with the 16S rRNA in the 70S ribosome. This chain is Large ribosomal subunit protein uL2, found in Bordetella petrii (strain ATCC BAA-461 / DSM 12804 / CCUG 43448).